The chain runs to 539 residues: O-phosphoserine--tRNA(Cys) ligase (539 aa).

Substrate contacts are provided by residues 188 to 190, 233 to 235, 275 to 276, and Asn327; these read HMT, SAS, and YY.

The protein belongs to the class-II aminoacyl-tRNA synthetase family. O-phosphoseryl-tRNA(Cys) synthetase subfamily. Homotetramer. Interacts with SepCysS.

It catalyses the reaction tRNA(Cys) + O-phospho-L-serine + ATP = O-phospho-L-seryl-tRNA(Cys) + AMP + diphosphate. Functionally, catalyzes the attachment of O-phosphoserine (Sep) to tRNA(Cys). The sequence is that of O-phosphoserine--tRNA(Cys) ligase from Methanococcoides burtonii (strain DSM 6242 / NBRC 107633 / OCM 468 / ACE-M).